The chain runs to 544 residues: CTP synthase (544 aa).

The amidoligase domain stretch occupies residues 1 to 265 (MTKFIFVTGG…DNIITEQLQL (265 aa)). Ser13 serves as a coordination point for CTP. Ser13 lines the UTP pocket. Residues 14 to 19 (SLGKGI) and Asp71 contribute to the ATP site. Residues Asp71 and Glu139 each contribute to the Mg(2+) site. CTP contacts are provided by residues 146-148 (DIE), 186-191 (KTKPTQ), and Lys222. UTP-binding positions include 186–191 (KTKPTQ) and Lys222. The 255-residue stretch at 290–544 (KIAMVGKYVD…VKAALNNKKA (255 aa)) folds into the Glutamine amidotransferase type-1 domain. L-glutamine is bound at residue Gly353. The Nucleophile; for glutamine hydrolysis role is filled by Cys380. Residues 381-384 (LGMQ), Glu404, and Arg471 contribute to the L-glutamine site. Catalysis depends on residues His517 and Glu519.

This sequence belongs to the CTP synthase family. As to quaternary structure, homotetramer.

The catalysed reaction is UTP + L-glutamine + ATP + H2O = CTP + L-glutamate + ADP + phosphate + 2 H(+). It catalyses the reaction L-glutamine + H2O = L-glutamate + NH4(+). It carries out the reaction UTP + NH4(+) + ATP = CTP + ADP + phosphate + 2 H(+). The protein operates within pyrimidine metabolism; CTP biosynthesis via de novo pathway; CTP from UDP: step 2/2. With respect to regulation, allosterically activated by GTP, when glutamine is the substrate; GTP has no effect on the reaction when ammonia is the substrate. The allosteric effector GTP functions by stabilizing the protein conformation that binds the tetrahedral intermediate(s) formed during glutamine hydrolysis. Inhibited by the product CTP, via allosteric rather than competitive inhibition. Catalyzes the ATP-dependent amination of UTP to CTP with either L-glutamine or ammonia as the source of nitrogen. Regulates intracellular CTP levels through interactions with the four ribonucleotide triphosphates. This Neisseria meningitidis serogroup B (strain ATCC BAA-335 / MC58) protein is CTP synthase.